The primary structure comprises 436 residues: Glutamyl-tRNA reductase (436 aa).

Residues 49–52 (TCNR), S109, 114–116 (EPQ), and Q120 each bind substrate. C50 serves as the catalytic Nucleophile. 189–194 (GAGEMC) contributes to the NADP(+) binding site.

The protein belongs to the glutamyl-tRNA reductase family. In terms of assembly, homodimer.

It carries out the reaction (S)-4-amino-5-oxopentanoate + tRNA(Glu) + NADP(+) = L-glutamyl-tRNA(Glu) + NADPH + H(+). The protein operates within porphyrin-containing compound metabolism; protoporphyrin-IX biosynthesis; 5-aminolevulinate from L-glutamyl-tRNA(Glu): step 1/2. Catalyzes the NADPH-dependent reduction of glutamyl-tRNA(Glu) to glutamate 1-semialdehyde (GSA). The sequence is that of Glutamyl-tRNA reductase from Pelobacter propionicus (strain DSM 2379 / NBRC 103807 / OttBd1).